Consider the following 424-residue polypeptide: Inhibin beta A chain (424 aa).

A signal peptide spans 1-20 (MPLLWLRGFLLASCWIIVRS). Residues 21–308 (SPTPGSEGHG…EDHPHRRRRR (288 aa)) constitute a propeptide that is removed on maturation. N-linked (GlcNAc...) asparagine glycosylation is present at N165. Positions 264–275 (EVDGDGKKKDGS) are enriched in basic and acidic residues. The disordered stretch occupies residues 264–306 (EVDGDGKKKDGSDGGLEEEKEQSHRPFLMLQARQSEDHPHRRR). Disulfide bonds link C312–C320, C319–C389, C348–C421, and C352–C423.

This sequence belongs to the TGF-beta family. Dimeric, linked by one or more disulfide bonds. Inhibin A is a dimer of alpha/INHA and beta-A/INHBA. Activin A is a homodimer of beta-A/INHBA. Activin AB is a dimer of beta-A/INHBA and beta-B/INHBB. Interacts with FST and FSTL3; these interactions prevent activin A interaction to its type II receptor. Activin A interacts with ACVR2A. Activin A interacts with BMPR2. Inhibin A interacts with ACVR1; this interaction creates a non-signaling complex (NSC) that inhibits ACVR1-mediated BMP signaling. Inhibin A interacts with ACVR2A. As to expression, uterus, ovary and liver.

It is found in the secreted. In terms of biological role, inhibins/activins are involved in regulating a number of diverse functions such as hypothalamic and pituitary hormone secretion, gonadal hormone secretion, germ cell development and maturation, erythroid differentiation, insulin secretion, nerve cell survival, embryonic axial development or bone growth, depending on their subunit composition. Functionally, activin A is a homodimer of INHBA that plays a role in several essential biological processes including embryonic development, stem cell maintenance and differentiation, haematopoiesis, cell proliferation and tissue fibrosis. Signals through type I (such as ACVR1B or ACVR1C) and type II receptors (such as ACVR2A, ACVR2B or BMPR2) which, upon ligand binding, phosphorylate SMAD2 and SMAD3 intracellular signaling mediators that form a complex with SMAD4, translocate to the nucleus and modulate gene expression. Can also activate alternative non-canonical intracellular signaling pathways including the p38 MAPK, extracellular signal-regulated kinases 1/2 (ERK1/2) and c-Jun N-terminal kinases (JNKs) to modulate cell migration and differentiation. Alternatively, promotes osteoblastic differentiation via ACVRL1-SMAD1/5/9 pathway. In addition, can engage the type I receptor ACVR1 to form an ACVR1-activin A-type II receptor non-signaling complex (NSC) that renders receptors unavailable for engagement with BMPs, hence resulting in an apparent inhibition of ACVR1-mediated BMP signaling. Its function is as follows. Inhibin A is a dimer of alpha/INHA and beta-A/INHBA that functions as a feedback regulator in the hypothalamic-pituitary-gonadal (HPG) axis. Inhibits the secretion of FSH from the anterior pituitary gland by acting on pituitary gonadotrope cells. Antagonizes activin A by binding to the proteoglycan, betaglycan, and forming a stable complex with and, thereby, sequestering type II activin receptors while excluding type I receptor. The polypeptide is Inhibin beta A chain (Inhba) (Mus musculus (Mouse)).